The sequence spans 222 residues: Coiled-coil domain-containing protein 43 homolog (222 aa).

Residues 80–111 (ETENKLKLTNLKLEQELKIKETTQSEINEEEK) adopt a coiled-coil conformation. Disordered regions lie at residues 102 to 126 (TQSEINEEEKYENPYHKMSREEQKK) and 159 to 222 (EDNK…KRRL). Basic and acidic residues-rich tracts occupy residues 112–126 (YENPYHKMSREEQKK) and 175–212 (RIADEEKAKREKSKIEHQKKVQRDKEALEKQKRDEEKK). Residues 168–222 (GENLNAKRIADEEKAKREKSKIEHQKKVQRDKEALEKQKRDEEKKKTVKKEKRRL) are a coiled coil. Positions 213 to 222 (KTVKKEKRRL) are enriched in basic residues.

The protein belongs to the CCDC43 family.

The protein is Coiled-coil domain-containing protein 43 homolog of Dictyostelium discoideum (Social amoeba).